A 322-amino-acid polypeptide reads, in one-letter code: Arginase-1 (322 aa).

N6-succinyllysine is present on K17. S62 and S72 each carry phosphoserine. K75 carries the N6-succinyllysine modification. Positions 101, 124, 126, and 128 each coordinate Mn(2+). Substrate-binding positions include 126–130 and 137–139; these read HTDIN and SGN. S163 bears the Phosphoserine mark. D183 is a substrate binding site. Residue S217 is modified to Phosphoserine. Residues D232 and D234 each contribute to the Mn(2+) site. Residues T246 and E277 each contribute to the substrate site.

The protein belongs to the arginase family. Homotrimer. Interacts with CMTM6. It depends on Mn(2+) as a cofactor. In terms of tissue distribution, within the immune system initially reported to be selectively expressed in granulocytes (polymorphonuclear leukocytes [PMNs]). Also detected in macrophages mycobacterial granulomas. Expressed in group2 innate lymphoid cells (ILC2s) during lung disease.

It is found in the cytoplasm. The protein resides in the cytoplasmic granule. The catalysed reaction is L-arginine + H2O = urea + L-ornithine. Its pathway is nitrogen metabolism; urea cycle; L-ornithine and urea from L-arginine: step 1/1. In terms of biological role, key element of the urea cycle converting L-arginine to urea and L-ornithine, which is further metabolized into metabolites proline and polyamides that drive collagen synthesis and bioenergetic pathways critical for cell proliferation, respectively; the urea cycle takes place primarily in the liver and, to a lesser extent, in the kidneys. Its function is as follows. Functions in L-arginine homeostasis in nonhepatic tissues characterized by the competition between nitric oxide synthase (NOS) and arginase for the available intracellular substrate arginine. Arginine metabolism is a critical regulator of innate and adaptive immune responses. Involved in an antimicrobial effector pathway in polymorphonuclear granulocytes (PMN). Upon PMN cell death is liberated from the phagolysosome and depletes arginine in the microenvironment leading to suppressed T cell and natural killer (NK) cell proliferation and cytokine secretion. In group 2 innate lymphoid cells (ILC2s) promotes acute type 2 inflammation in the lung and is involved in optimal ILC2 proliferation but not survival. In humans, the immunological role in the monocytic/macrophage/dendritic cell (DC) lineage is unsure. This is Arginase-1 (ARG1) from Homo sapiens (Human).